A 291-amino-acid polypeptide reads, in one-letter code: uncharacterized protein (291 aa).

This sequence belongs to the PhyH family.

This is an uncharacterized protein from Mycobacterium bovis (strain ATCC BAA-935 / AF2122/97).